The following is a 1063-amino-acid chain: DNA-directed RNA polymerase subunit beta (1063 aa).

The protein belongs to the RNA polymerase beta chain family. In plastids the minimal PEP RNA polymerase catalytic core is composed of four subunits: alpha, beta, beta', and beta''. When a (nuclear-encoded) sigma factor is associated with the core the holoenzyme is formed, which can initiate transcription.

The protein localises to the plastid. Its subcellular location is the chloroplast. It carries out the reaction RNA(n) + a ribonucleoside 5'-triphosphate = RNA(n+1) + diphosphate. Its function is as follows. DNA-dependent RNA polymerase catalyzes the transcription of DNA into RNA using the four ribonucleoside triphosphates as substrates. This chain is DNA-directed RNA polymerase subunit beta, found in Zygnema circumcarinatum (Green alga).